The following is a 424-amino-acid chain: 5,5'-dehydrodivanillate O-demethylase oxygenase subunit (424 aa).

Positions 27-135 (WHPIGGESEF…VRALGGLLWA (109 aa)) constitute a Rieske domain. [2Fe-2S] cluster-binding residues include C68, H70, C87, and H90. Fe cation is bound by residues H181, H186, and D306.

This sequence belongs to the bacterial ring-hydroxylating dioxygenase alpha subunit family. As to quaternary structure, homotrimer. The three-component monooxygenase is composed of an oxygenase (LigXa), a ferredoxin (LigXc) and a ferredoxin reductase (LigXd). [2Fe-2S] cluster serves as cofactor. Fe cation is required as a cofactor.

The catalysed reaction is 5,5'-dehydrodivanillate + NADH + O2 + H(+) = 2,2',3-trihydroxy-3'-methoxy-5,5'-dicarboxybiphenyl + formaldehyde + NAD(+) + H2O. Functionally, involved in the catabolism of 5,5'-dehydrodivanillate (DDVA), an intermediate in the biodegradation of lignin. Part of a three-component monooxygenase that catalyzes the O-demethylation of DDVA, leading to the formation of 2,2',3-trihydroxy-3'-methoxy-5,5'-dicarboxybiphenyl (OH-DDVA). The chain is 5,5'-dehydrodivanillate O-demethylase oxygenase subunit from Sphingobium sp. (strain NBRC 103272 / SYK-6).